Reading from the N-terminus, the 71-residue chain is Exodeoxyribonuclease 7 small subunit (71 aa).

This sequence belongs to the XseB family. Heterooligomer composed of large and small subunits.

Its subcellular location is the cytoplasm. It carries out the reaction Exonucleolytic cleavage in either 5'- to 3'- or 3'- to 5'-direction to yield nucleoside 5'-phosphates.. Functionally, bidirectionally degrades single-stranded DNA into large acid-insoluble oligonucleotides, which are then degraded further into small acid-soluble oligonucleotides. The protein is Exodeoxyribonuclease 7 small subunit of Streptococcus agalactiae serotype Ia (strain ATCC 27591 / A909 / CDC SS700).